A 349-amino-acid chain; its full sequence is Holliday junction branch migration complex subunit RuvB (349 aa).

The segment at Met1 to Tyr183 is large ATPase domain (RuvB-L). ATP is bound by residues Leu22, Arg23, Gly64, Lys67, Thr68, Thr69, Glu130–Phe132, Arg173, Tyr183, and Arg220. Residue Thr68 coordinates Mg(2+). Residues Thr184–Glu254 are small ATPAse domain (RuvB-S). Positions Ser257–Glu349 are head domain (RuvB-H). DNA is bound by residues Arg293, Arg312, and Arg317.

Belongs to the RuvB family. Homohexamer. Forms an RuvA(8)-RuvB(12)-Holliday junction (HJ) complex. HJ DNA is sandwiched between 2 RuvA tetramers; dsDNA enters through RuvA and exits via RuvB. An RuvB hexamer assembles on each DNA strand where it exits the tetramer. Each RuvB hexamer is contacted by two RuvA subunits (via domain III) on 2 adjacent RuvB subunits; this complex drives branch migration. In the full resolvosome a probable DNA-RuvA(4)-RuvB(12)-RuvC(2) complex forms which resolves the HJ.

The protein localises to the cytoplasm. It carries out the reaction ATP + H2O = ADP + phosphate + H(+). Its function is as follows. The RuvA-RuvB-RuvC complex processes Holliday junction (HJ) DNA during genetic recombination and DNA repair, while the RuvA-RuvB complex plays an important role in the rescue of blocked DNA replication forks via replication fork reversal (RFR). RuvA specifically binds to HJ cruciform DNA, conferring on it an open structure. The RuvB hexamer acts as an ATP-dependent pump, pulling dsDNA into and through the RuvAB complex. RuvB forms 2 homohexamers on either side of HJ DNA bound by 1 or 2 RuvA tetramers; 4 subunits per hexamer contact DNA at a time. Coordinated motions by a converter formed by DNA-disengaged RuvB subunits stimulates ATP hydrolysis and nucleotide exchange. Immobilization of the converter enables RuvB to convert the ATP-contained energy into a lever motion, pulling 2 nucleotides of DNA out of the RuvA tetramer per ATP hydrolyzed, thus driving DNA branch migration. The RuvB motors rotate together with the DNA substrate, which together with the progressing nucleotide cycle form the mechanistic basis for DNA recombination by continuous HJ branch migration. Branch migration allows RuvC to scan DNA until it finds its consensus sequence, where it cleaves and resolves cruciform DNA. In Rhodopseudomonas palustris (strain ATCC BAA-98 / CGA009), this protein is Holliday junction branch migration complex subunit RuvB.